The primary structure comprises 361 residues: Phospho-N-acetylmuramoyl-pentapeptide-transferase (361 aa).

10 helical membrane passes run 25 to 45 (RGIL…PAVI), 73 to 93 (TMGG…WGDL), 98 to 118 (VWLV…DDWI), 139 to 159 (IFGL…AAIT), 168 to 188 (IALP…IVGF), 200 to 220 (GLAI…AYAS), 237 to 257 (AGEL…FLWF), 264 to 284 (VFMG…IAVI), 289 to 309 (MVLV…IIQV), and 339 to 359 (VIVR…ATLK).

Belongs to the glycosyltransferase 4 family. MraY subfamily. Mg(2+) is required as a cofactor.

It is found in the cell inner membrane. It carries out the reaction UDP-N-acetyl-alpha-D-muramoyl-L-alanyl-gamma-D-glutamyl-meso-2,6-diaminopimeloyl-D-alanyl-D-alanine + di-trans,octa-cis-undecaprenyl phosphate = di-trans,octa-cis-undecaprenyl diphospho-N-acetyl-alpha-D-muramoyl-L-alanyl-D-glutamyl-meso-2,6-diaminopimeloyl-D-alanyl-D-alanine + UMP. It functions in the pathway cell wall biogenesis; peptidoglycan biosynthesis. In terms of biological role, catalyzes the initial step of the lipid cycle reactions in the biosynthesis of the cell wall peptidoglycan: transfers peptidoglycan precursor phospho-MurNAc-pentapeptide from UDP-MurNAc-pentapeptide onto the lipid carrier undecaprenyl phosphate, yielding undecaprenyl-pyrophosphoryl-MurNAc-pentapeptide, known as lipid I. The chain is Phospho-N-acetylmuramoyl-pentapeptide-transferase from Xanthomonas oryzae pv. oryzae (strain PXO99A).